We begin with the raw amino-acid sequence, 1136 residues long: Myosin-binding protein C, fast-type (1136 aa).

Disordered stretches follow at residues methionine 1–aspartate 55 and alanine 151–glutamate 177. The segment covering lysine 13–proline 35 has biased composition (basic and acidic residues). The Ig-like C2-type 1 domain occupies proline 46 to valine 149. Basic and acidic residues predominate over residues serine 163–aspartate 174. 4 Ig-like C2-type domains span residues serine 250 to proline 339, proline 340 to lysine 432, glutamine 433 to proline 533, and proline 534 to valine 633. Fibronectin type-III domains are found at residues proline 636–threonine 732 and alanine 734–isoleucine 829. Residues proline 833–lysine 927 form the Ig-like C2-type 6 domain. A Fibronectin type-III 3 domain is found at proline 930–threonine 1025. The 94-residue stretch at proline 1043–glutamine 1136 folds into the Ig-like C2-type 7 domain.

Belongs to the immunoglobulin superfamily. MyBP family.

In terms of biological role, thick filament-associated protein located in the crossbridge region of vertebrate striated muscle a bands. In vitro it binds MHC, F-actin and native thin filaments, and modifies the activity of actin-activated myosin ATPase. It may modulate muscle contraction or may play a more structural role. The chain is Myosin-binding protein C, fast-type (Mybpc2) from Mus musculus (Mouse).